The primary structure comprises 248 residues: Triosephosphate isomerase (248 aa).

Substrate is bound by residues asparagine 10 and lysine 12. Residue histidine 95 is the Electrophile of the active site. Glutamate 165 functions as the Proton acceptor in the catalytic mechanism.

Belongs to the triosephosphate isomerase family. Homodimer.

It carries out the reaction D-glyceraldehyde 3-phosphate = dihydroxyacetone phosphate. The protein operates within carbohydrate biosynthesis; gluconeogenesis. Its pathway is carbohydrate degradation; glycolysis; D-glyceraldehyde 3-phosphate from glycerone phosphate: step 1/1. The chain is Triosephosphate isomerase (TPI1) from Debaryomyces hansenii (strain ATCC 36239 / CBS 767 / BCRC 21394 / JCM 1990 / NBRC 0083 / IGC 2968) (Yeast).